A 101-amino-acid chain; its full sequence is MASKVIVIALLCIALAAFVQGAPQYTHGEEPEYDEDDGADEPVQPHSSSNHADTEDDFDLSLLDKPYANAPENADPGRRPEFLKQHNNENQSDSSSGSTEN.

The signal sequence occupies residues 1–21 (MASKVIVIALLCIALAAFVQG). A disordered region spans residues 26–101 (THGEEPEYDE…SDSSSGSTEN (76 aa)). Over residues 31–40 (PEYDEDDGAD) the composition is skewed to acidic residues. The blocks active site cleft of host thrombin in a reverse direction compared to substrates stretch occupies residues 75–78 (DPGR). Over residues 75 to 87 (DPGRRPEFLKQHN) the composition is skewed to basic and acidic residues. Polar residues predominate over residues 88-101 (NENQSDSSSGSTEN). Asparagine 90 carries N-linked (GlcNAc...) asparagine glycosylation.

Belongs to the anophelin family. As to quaternary structure, interacts with human F2 (thrombin); the interaction results in thrombin inhibition.

Its subcellular location is the secreted. In terms of biological role, salivary protein with anticoagulant activity that inhibits host thrombin (F2). In Anopheles stephensi (Indo-Pakistan malaria mosquito), this protein is Salivary thrombin inhibitor anophelin.